We begin with the raw amino-acid sequence, 450 residues long: Keratin, type I cytoskeletal 25 (450 aa).

Over residues 1-23 the composition is skewed to low complexity; that stretch reads MSLRLSSASRRSCPRPTTGSLRL. A disordered region spans residues 1–26; that stretch reads MSLRLSSASRRSCPRPTTGSLRLSGG. The tract at residues 1–78 is head; the sequence is MSLRLSSASR…VNERGLLSGN (78 aa). The segment at 79–114 is coil 1A; it reads EKVTMQNLNDRLASYLDSVHALEEANADLEQKIKGW. The IF rod domain maps to 79–394; sequence EKVTMQNLND…LLIGGDDGAC (316 aa). Positions 115–136 are linker 1; sequence YEKFGPGSCRGLDHDYSRYFPI. The coil 1B stretch occupies residues 137-228; that stretch reads IDDLKNQIIA…KNHKEEMQVL (92 aa). The segment at 229–251 is linker 12; the sequence is QCAAGGNVNVEMNAAPGVDLTVL. Residues 252 to 390 are coil 2; it reads LNNMRAEYEA…ETYCLLIGGD (139 aa). Residues 391–450 are tail; that stretch reads DGACKSGGYKSKDYGSGNVGSQVKDSAKAIVVKKVLEEVDQRSKILTTRLRSLEEKSQSN. Ser-442 carries the phosphoserine modification.

Belongs to the intermediate filament family. Heterodimer of a type I and a type II keratin. Heterodimer with type II keratin KRT5 leading to the formation of keratin intermediate filament (KIF) network. Interacts with KRT6A to form filaments.

Its subcellular location is the cytoplasm. Its function is as follows. Essential for the proper assembly of type I and type II keratin protein complexes and formation of keratin intermediate filaments in the inner root sheath (irs). Plays a role in the cytoskeleton organization. This Pan troglodytes (Chimpanzee) protein is Keratin, type I cytoskeletal 25 (KRT25).